We begin with the raw amino-acid sequence, 305 residues long: uncharacterized protein (305 aa).

Basic residues predominate over residues 1–10; the sequence is MLWAQRKKRK. The segment at 1–30 is disordered; it reads MLWAQRKKRKATTETTEDKPAESHRPNDSW. Residues 16–27 show a composition bias toward basic and acidic residues; the sequence is TEDKPAESHRPN. A Phosphoserine modification is found at Ser-39. Positions 92-101 are enriched in polar residues; it reads QKISGTSVSK. Residues 92–114 are disordered; it reads QKISGTSVSKEMQRESGKSPSME. Ser-158 carries the post-translational modification Phosphoserine. The segment covering 197 to 208 has biased composition (low complexity); that stretch reads SHHGNQSHQNHN. Residues 197–305 form a disordered region; sequence SHHGNQSHQN…VNRRNQIYDS (109 aa). Polar residues-rich tracts occupy residues 209 to 221 and 231 to 244; these read TYPC…SRSV and LSHQ…SHQN. Low complexity predominate over residues 247 to 293; it reads GHPSQQGHSSHSNQQGHLGLSSQQGHPSQSSHQSHQGQPGHPNHQSH. Polar residues predominate over residues 294-305; the sequence is SLVNRRNQIYDS.

This is an uncharacterized protein from Rattus norvegicus (Rat).